Here is a 195-residue protein sequence, read N- to C-terminus: Nucleoside triphosphate pyrophosphatase (195 aa).

Residue D70 is the Proton acceptor of the active site.

This sequence belongs to the Maf family. It depends on a divalent metal cation as a cofactor.

The protein localises to the cytoplasm. It carries out the reaction a ribonucleoside 5'-triphosphate + H2O = a ribonucleoside 5'-phosphate + diphosphate + H(+). The enzyme catalyses a 2'-deoxyribonucleoside 5'-triphosphate + H2O = a 2'-deoxyribonucleoside 5'-phosphate + diphosphate + H(+). Its function is as follows. Nucleoside triphosphate pyrophosphatase. May have a dual role in cell division arrest and in preventing the incorporation of modified nucleotides into cellular nucleic acids. The polypeptide is Nucleoside triphosphate pyrophosphatase (Synechocystis sp. (strain ATCC 27184 / PCC 6803 / Kazusa)).